The sequence spans 179 residues: Large ribosomal subunit protein uL6 (179 aa).

This sequence belongs to the universal ribosomal protein uL6 family. As to quaternary structure, part of the 50S ribosomal subunit.

Its function is as follows. This protein binds to the 23S rRNA, and is important in its secondary structure. It is located near the subunit interface in the base of the L7/L12 stalk, and near the tRNA binding site of the peptidyltransferase center. This is Large ribosomal subunit protein uL6 from Prochlorococcus marinus (strain NATL2A).